The sequence spans 612 residues: GPI mannosyltransferase 3 (612 aa).

A run of 2 helical transmembrane segments spans residues 92–112 (LLAI…AGLM) and 145–165 (VIYA…YFTI). A glycan (N-linked (GlcNAc...) asparagine) is linked at Asn-188. 3 consecutive transmembrane segments (helical) span residues 192–212 (IALL…RTFI), 254–274 (RPSN…NLLL), and 288–308 (ILVV…YFYN). Asn-321 carries an N-linked (GlcNAc...) asparagine glycan. Residues 339 to 359 (LLQSLPIMLGYSLPLFIYGLF) traverse the membrane as a helical segment. Residue Asn-361 is glycosylated (N-linked (GlcNAc...) asparagine). The next 3 membrane-spanning stretches (helical) occupy residues 371–391 (FGAL…YSYL), 398–418 (FIYP…LKLA), and 429–449 (EYVW…TTFQ). N-linked (GlcNAc...) asparagine glycosylation is found at Asn-508, Asn-526, and Asn-550.

It belongs to the glycosyltransferase 22 family. PIGB subfamily.

The protein localises to the endoplasmic reticulum membrane. Its pathway is glycolipid biosynthesis; glycosylphosphatidylinositol-anchor biosynthesis. In terms of biological role, mannosyltransferase involved in glycosylphosphatidylinositol-anchor biosynthesis. Transfers the third mannose to Man2-GlcN-acyl-PI during GPI precursor assembly. In Candida glabrata (strain ATCC 2001 / BCRC 20586 / JCM 3761 / NBRC 0622 / NRRL Y-65 / CBS 138) (Yeast), this protein is GPI mannosyltransferase 3 (GPI10).